Consider the following 445-residue polypeptide: Na(+)-translocating NADH-quinone reductase subunit A (445 aa).

It belongs to the NqrA family. As to quaternary structure, composed of six subunits; NqrA, NqrB, NqrC, NqrD, NqrE and NqrF.

The enzyme catalyses a ubiquinone + n Na(+)(in) + NADH + H(+) = a ubiquinol + n Na(+)(out) + NAD(+). In terms of biological role, NQR complex catalyzes the reduction of ubiquinone-1 to ubiquinol by two successive reactions, coupled with the transport of Na(+) ions from the cytoplasm to the periplasm. NqrA to NqrE are probably involved in the second step, the conversion of ubisemiquinone to ubiquinol. This is Na(+)-translocating NADH-quinone reductase subunit A from Marinomonas sp. (strain MWYL1).